The chain runs to 412 residues: Gamma-glutamyl phosphate reductase (412 aa).

The protein belongs to the gamma-glutamyl phosphate reductase family.

Its subcellular location is the cytoplasm. It catalyses the reaction L-glutamate 5-semialdehyde + phosphate + NADP(+) = L-glutamyl 5-phosphate + NADPH + H(+). Its pathway is amino-acid biosynthesis; L-proline biosynthesis; L-glutamate 5-semialdehyde from L-glutamate: step 2/2. Its function is as follows. Catalyzes the NADPH-dependent reduction of L-glutamate 5-phosphate into L-glutamate 5-semialdehyde and phosphate. The product spontaneously undergoes cyclization to form 1-pyrroline-5-carboxylate. This is Gamma-glutamyl phosphate reductase from Bartonella bacilliformis (strain ATCC 35685 / KC583 / Herrer 020/F12,63).